Here is a 54-residue protein sequence, read N- to C-terminus: Califin-C (54 aa).

Cys25 and Cys53 are oxidised to a cystine. Leu36 is modified (leucine amide).

The protein belongs to the molluscan ELH family. As to quaternary structure, this protein consists of a large 36-residue subunit, bound by a single disulfide-bond to a small 18-residue subunit.

It localises to the secreted. Its function is as follows. Injected in sexually mature animals califin C excites LB and LC cells of the abdominal ganglion and cause egg-laying. This chain is Califin-C, found in Aplysia californica (California sea hare).